A 385-amino-acid polypeptide reads, in one-letter code: MKNNRTFLEKLLEGSEVEWKPLDEVANIVNNARKPVKSSLRVSGNIPYYGANNIQDYVEGYTHEGEFVLIAEDGSASLENYSIQWAVGKFWANNHVHVVNGKEKLNNRFLYHYLTNMNFIPFLAGKERAKLTKAKLQQIPIPIPPLSVQTEIVKILDALTALTSELTSELTSELTSELILRQKQYEYYREKLLNIDEMNKVIELGDVGPVRMCKRILKNQTASSGDIPFYKIGTFGKKPDAYISNELFQEYKQKYSYPKKGDILISASGTIGRTVIFDGENSYFQDSNIVWIDNDETLVLNKYLYHFYKIAKWGIAEGGTIQRLYNDNLKKVKISIPPLKEQHRIVSILDKFETLTNSITEGLPLAIEQSQKRYEYYRELLLNFS.

This sequence belongs to the type-I restriction system S methylase family.

Functionally, a putative specificity subunit for a type I restriction enzyme; the corresponding endonuclease and methylase subunits have multiple frameshifts and are probably not expressed. The polypeptide is Putative type I restriction enzyme specificity subunit S.HindORF215P (Haemophilus influenzae (strain ATCC 51907 / DSM 11121 / KW20 / Rd)).